We begin with the raw amino-acid sequence, 525 residues long: MQITSNEISVEVNGQSYTLPAGSTLGDALEVSRASYIAGTAVGIIKRAAEKRTEEITEYAIKTPRGELRIELKDPESSSGKLWAEHYKEYEGTYIHWASPEALAFGPFEADIKPFHETGSFEAFDVVFGAGGFDPHNTHLIISRKRHVAEYGAPEDGVFATVVTGRNLIFRLSREDPILSIEPIIEWEQLAEKTCTTDLSTILEDEDSVFTYFEVELSRNSPKGAEHFYALTRKGTLSVDVTTSSFISDDTLREEPVPYENFELRKEGAISVRTVGYGTGRTYISREERPSSLVHSIVGQVITGIELIKLAEKGQKLSVESLPPQIVLLGHSFEEVEPVLTAIGIELVKEGYTEENAVIVKQDPPTTLEILGEAKVTAYGVPREKLIEVELYPERAPKSVDFFRHSLELKTKPVGKLPVHMIYDNTYLFKTEKEAVKYKEVLPENTPADTVLAGEIGITNQAAKRMGTIGVRLVDDDLFGPTGEKFSSTNIIGRILEPERLIGIEEGDAIYVSEVVRRKTDEQEN.

The protein belongs to the UPF0288 family.

The polypeptide is UPF0288 protein MA_3997 (Methanosarcina acetivorans (strain ATCC 35395 / DSM 2834 / JCM 12185 / C2A)).